The following is a 535-amino-acid chain: Glutamate--cysteine ligase (535 aa).

It belongs to the glutamate--cysteine ligase type 1 family. Type 1 subfamily.

The enzyme catalyses L-cysteine + L-glutamate + ATP = gamma-L-glutamyl-L-cysteine + ADP + phosphate + H(+). Its pathway is sulfur metabolism; glutathione biosynthesis; glutathione from L-cysteine and L-glutamate: step 1/2. The chain is Glutamate--cysteine ligase from Pseudomonas syringae pv. syringae (strain B728a).